The primary structure comprises 545 residues: ATP synthase subunit alpha (545 aa).

Residue 172–179 participates in ATP binding; it reads GDRKTGKT.

Belongs to the ATPase alpha/beta chains family. F-type ATPases have 2 components, CF(1) - the catalytic core - and CF(0) - the membrane proton channel. CF(1) has five subunits: alpha(3), beta(3), gamma(1), delta(1), epsilon(1). CF(0) has three main subunits: a(1), b(2) and c(9-12). The alpha and beta chains form an alternating ring which encloses part of the gamma chain. CF(1) is attached to CF(0) by a central stalk formed by the gamma and epsilon chains, while a peripheral stalk is formed by the delta and b chains.

The protein localises to the cell membrane. It catalyses the reaction ATP + H2O + 4 H(+)(in) = ADP + phosphate + 5 H(+)(out). In terms of biological role, produces ATP from ADP in the presence of a proton gradient across the membrane. The alpha chain is a regulatory subunit. The chain is ATP synthase subunit alpha from Corynebacterium urealyticum (strain ATCC 43042 / DSM 7109).